Here is a 647-residue protein sequence, read N- to C-terminus: Neuronal PAS domain-containing protein 4-like (647 aa).

The interval 16–29 is basic motif; degenerate; that stretch reads KRFRSTKGASKARR. Residues 16–67 form the bHLH domain; that stretch reads KRFRSTKGASKARRDQMNSEIRNLRALLPISPEHRLSYLHSMSITCTYIRKS. Residues 30–67 are helix-loop-helix motif; sequence DQMNSEIRNLRALLPISPEHRLSYLHSMSITCTYIRKS. PAS domains are found at residues 117–181 and 238–274; these read VLQA…SPSG and SADM…HPDD.

As to quaternary structure, heterodimer; efficient DNA binding requires dimerization with another bHLH protein. Specifically expressed in endothelial and hematopoietic precursor cells.

Its subcellular location is the nucleus. Transcription factor specifically expressed in endothelial and hematopoietic precursor cells that acts as a key regulator of the endothelial differentiation cascade. Acts as an early-response transcription factor that regulates the expression of early regulators of endothelial and haematopoietic differentiation, such as etv2 and tal1. The polypeptide is Neuronal PAS domain-containing protein 4-like (Danio rerio (Zebrafish)).